The sequence spans 130 residues: Small ribosomal subunit protein uS8 (130 aa).

This sequence belongs to the universal ribosomal protein uS8 family. Part of the 30S ribosomal subunit. Contacts proteins S5 and S12.

In terms of biological role, one of the primary rRNA binding proteins, it binds directly to 16S rRNA central domain where it helps coordinate assembly of the platform of the 30S subunit. This is Small ribosomal subunit protein uS8 from Ectopseudomonas mendocina (strain ymp) (Pseudomonas mendocina).